The following is a 410-amino-acid chain: Adenosylhomocysteinase (410 aa).

Residues Asp-117 and Glu-142 each contribute to the substrate site. 143 to 145 lines the NAD(+) pocket; that stretch reads TTT. Substrate is bound by residues Lys-172 and Asp-176. Residues Asn-177, 206 to 211, Glu-229, 285 to 287, and Asn-332 contribute to the NAD(+) site; these read GYGYCG and AGH.

The protein belongs to the adenosylhomocysteinase family. NAD(+) serves as cofactor.

Its subcellular location is the cytoplasm. The enzyme catalyses S-adenosyl-L-homocysteine + H2O = L-homocysteine + adenosine. The protein operates within amino-acid biosynthesis; L-homocysteine biosynthesis; L-homocysteine from S-adenosyl-L-homocysteine: step 1/1. Functionally, may play a key role in the regulation of the intracellular concentration of adenosylhomocysteine. This Thermoplasma volcanium (strain ATCC 51530 / DSM 4299 / JCM 9571 / NBRC 15438 / GSS1) protein is Adenosylhomocysteinase.